The sequence spans 281 residues: Carbonic anhydrase (281 aa).

Zn(2+)-binding residues include Cys106, His161, and Cys164.

This sequence belongs to the beta-class carbonic anhydrase family. It depends on Zn(2+) as a cofactor.

The protein resides in the cytoplasm. It is found in the nucleus. The protein localises to the mitochondrion intermembrane space. The catalysed reaction is hydrogencarbonate + H(+) = CO2 + H2O. With respect to regulation, amines and amino acids act as activators of catalytic activity, whereas natural product-based phenols, dithiocarbamates, aliphatic and aromatic carboxylates, boronic acids, and sulfonamides act as inhibitors of enzymatic activity. Also inhibited by anions such as cyanide and carbonate, and to a lesser extent by sulfate, phenylboronic, and phenyl arsonic acid. Catalyzes the reversible hydration of CO(2) to H(2)CO(3). The main role may be to provide inorganic carbon for the bicarbonate-dependent carboxylation reactions catalyzed by pyruvate carboxylase, acetyl-CoA carboxylase and carbamoyl-phosphate synthetase. Involved in protection against oxidative damage. Acts as a CO(2) chemosensor and induces CO(2)-mediated filamentation. Essential for pathological growth in niches where sufficient CO(2) is not supplied by the host. Necessary for white-to-opaque switching at low CO(2) concentrations. This chain is Carbonic anhydrase (NCE103), found in Candida albicans (strain SC5314 / ATCC MYA-2876) (Yeast).